The sequence spans 101 residues: Small ribosomal subunit protein uS14 (101 aa).

The disordered stretch occupies residues 51–72 (LPRDSSPSRQRNPCRQTGRPHG). Residues 52–65 (PRDSSPSRQRNPCR) show a composition bias toward polar residues.

It belongs to the universal ribosomal protein uS14 family. In terms of assembly, part of the 30S ribosomal subunit. Contacts proteins S3 and S10.

Its function is as follows. Binds 16S rRNA, required for the assembly of 30S particles and may also be responsible for determining the conformation of the 16S rRNA at the A site. This chain is Small ribosomal subunit protein uS14, found in Buchnera aphidicola subsp. Acyrthosiphon kondoi (Acyrthosiphon kondoi symbiotic bacterium).